We begin with the raw amino-acid sequence, 1041 residues long: Isoleucine--tRNA ligase (1041 aa).

The short motif at 53–63 (PFANGLPHYGH) is the 'HIGH' region element. The short motif at 619–623 (KMSKS) is the 'KMSKS' region element. Lys-622 contacts ATP.

Belongs to the class-I aminoacyl-tRNA synthetase family. IleS type 2 subfamily. As to quaternary structure, monomer. It depends on Zn(2+) as a cofactor.

The protein resides in the cytoplasm. The catalysed reaction is tRNA(Ile) + L-isoleucine + ATP = L-isoleucyl-tRNA(Ile) + AMP + diphosphate. Catalyzes the attachment of isoleucine to tRNA(Ile). As IleRS can inadvertently accommodate and process structurally similar amino acids such as valine, to avoid such errors it has two additional distinct tRNA(Ile)-dependent editing activities. One activity is designated as 'pretransfer' editing and involves the hydrolysis of activated Val-AMP. The other activity is designated 'posttransfer' editing and involves deacylation of mischarged Val-tRNA(Ile). This chain is Isoleucine--tRNA ligase (ileS), found in Mycobacterium tuberculosis (strain CDC 1551 / Oshkosh).